The chain runs to 548 residues: T-complex protein 1 subunit theta (548 aa).

A2 is subject to N-acetylalanine. S23 carries the phosphoserine modification. A Phosphotyrosine modification is found at Y30. Y47 and G48 together coordinate ADP. D99 contacts Mg(2+). ADP-binding residues include G100, T101, N102, and F103. Residues G100, T101, and N102 each coordinate ATP. Residue S162 is modified to Phosphoserine. 3 residues coordinate ADP: M169, S170, and K171. S170 and K171 together coordinate ATP. The residue at position 213 (S213) is a Phosphoserine. Residues K224, K254, and K260 each participate in a glycyl lysine isopeptide (Lys-Gly) (interchain with G-Cter in SUMO2) cross-link. S269 and S317 each carry phosphoserine. N6-acetyllysine occurs at positions 318 and 400. G412 is an ADP binding site. G412 contributes to the ATP binding site. Residue K459 forms a Glycyl lysine isopeptide (Lys-Gly) (interchain with G-Cter in SUMO1) linkage. An N6-acetyllysine modification is found at K466. D499 contributes to the ADP binding site. 2 residues coordinate ATP: D499 and K504. Phosphotyrosine is present on Y505. Residues 529–548 (PAGGPKPPSGKKDWDDDQND) are disordered. Residue K534 forms a Glycyl lysine isopeptide (Lys-Gly) (interchain with G-Cter in SUMO2) linkage. At S537 the chain carries Phosphoserine. K539 participates in a covalent cross-link: Glycyl lysine isopeptide (Lys-Gly) (interchain with G-Cter in SUMO2).

The protein belongs to the TCP-1 chaperonin family. As to quaternary structure, component of the chaperonin-containing T-complex (TRiC), a hexadecamer composed of two identical back-to-back stacked rings enclosing a protein folding chamber. Each ring is made up of eight different subunits: TCP1/CCT1, CCT2, CCT3, CCT4, CCT5, CCT6A/CCT6, CCT7, CCT8. Interacts with PACRG. Interacts with DNAAF4. Interacts with synaptic plasticity regulator PANTS.

Its subcellular location is the cytoplasm. It localises to the cytoskeleton. The protein localises to the microtubule organizing center. The protein resides in the centrosome. It is found in the cilium basal body. The enzyme catalyses ATP + H2O = ADP + phosphate + H(+). Functionally, component of the chaperonin-containing T-complex (TRiC), a molecular chaperone complex that assists the folding of actin, tubulin and other proteins upon ATP hydrolysis. The TRiC complex mediates the folding of WRAP53/TCAB1, thereby regulating telomere maintenance. As part of the TRiC complex may play a role in the assembly of BBSome, a complex involved in ciliogenesis regulating transports vesicles to the cilia. This is T-complex protein 1 subunit theta (CCT8) from Homo sapiens (Human).